A 132-amino-acid chain; its full sequence is DNA-directed RNA polymerase subunit omega (132 aa).

Residues 89–109 (HSSESESIFNTSSQEEGTSFD) form a disordered region. Over residues 96–105 (IFNTSSQEEG) the composition is skewed to polar residues.

It belongs to the RNA polymerase subunit omega family. In terms of assembly, the RNAP catalytic core consists of 2 alpha, 1 beta, 1 beta' and 1 omega subunit. When a sigma factor is associated with the core the holoenzyme is formed, which can initiate transcription.

The enzyme catalyses RNA(n) + a ribonucleoside 5'-triphosphate = RNA(n+1) + diphosphate. In terms of biological role, promotes RNA polymerase assembly. Latches the N- and C-terminal regions of the beta' subunit thereby facilitating its interaction with the beta and alpha subunits. This is DNA-directed RNA polymerase subunit omega from Bartonella tribocorum (strain CIP 105476 / IBS 506).